The chain runs to 319 residues: UPF0761 membrane protein PBPRA3489 (319 aa).

Helical transmembrane passes span 50–70 (LVPM…FAGL), 107–127 (VGIG…DHAL), 143–163 (FSIY…SIAV), 188–208 (ALPV…VPNL), 215–235 (ALLG…GFAL), and 249–269 (ALAV…IVLL).

This sequence belongs to the UPF0761 family.

It localises to the cell inner membrane. In Photobacterium profundum (strain SS9), this protein is UPF0761 membrane protein PBPRA3489.